The following is a 297-amino-acid chain: 33 kDa chaperonin (297 aa).

Intrachain disulfides connect cysteine 233–cysteine 235 and cysteine 267–cysteine 270.

This sequence belongs to the HSP33 family. Post-translationally, under oxidizing conditions two disulfide bonds are formed involving the reactive cysteines. Under reducing conditions zinc is bound to the reactive cysteines and the protein is inactive.

The protein resides in the cytoplasm. Functionally, redox regulated molecular chaperone. Protects both thermally unfolding and oxidatively damaged proteins from irreversible aggregation. Plays an important role in the bacterial defense system toward oxidative stress. This is 33 kDa chaperonin from Haemophilus ducreyi (strain 35000HP / ATCC 700724).